A 304-amino-acid chain; its full sequence is UTP--glucose-1-phosphate uridylyltransferase 1 (304 aa).

The protein belongs to the UDPGP type 2 family.

The enzyme catalyses alpha-D-glucose 1-phosphate + UTP + H(+) = UDP-alpha-D-glucose + diphosphate. Its pathway is carbohydrate metabolism; nucleotide-sugar metabolism. The chain is UTP--glucose-1-phosphate uridylyltransferase 1 (hasC1) from Streptococcus pyogenes serotype M18 (strain MGAS8232).